We begin with the raw amino-acid sequence, 786 residues long: Digalactosyldiacylglycerol synthase 1, chloroplastic (786 aa).

The transit peptide at 1–25 (MASQRQPPSSSNAFSFLSKGWREVR) directs the protein to the chloroplast.

The protein belongs to the glycosyltransferase group 1 family. Glycosyltransferase 4 subfamily. As to expression, high expression in nodules infected cells, but low in nodule inner cortex and root central cylinder.

It is found in the plastid. The protein resides in the chloroplast outer membrane. The protein localises to the plastid outer membrane. It carries out the reaction a 1,2-diacyl-3-O-(beta-D-galactosyl)-sn-glycerol + UDP-alpha-D-galactose = a 1,2-diacyl-3-O-[alpha-D-galactosyl-(1-&gt;6)-beta-D-galactosyl]-sn-glycerol + UDP + H(+). Involved in the synthesis of diacylglycerol galactolipids that are specifically found in thylakoid and in nodule peribacteroid membranes. Specific for alpha-glycosidic linkages. The polypeptide is Digalactosyldiacylglycerol synthase 1, chloroplastic (Lotus japonicus (Lotus corniculatus var. japonicus)).